The sequence spans 199 residues: Translation initiation factor IF-3 (199 aa).

Belongs to the IF-3 family. In terms of assembly, monomer.

It is found in the cytoplasm. IF-3 binds to the 30S ribosomal subunit and shifts the equilibrium between 70S ribosomes and their 50S and 30S subunits in favor of the free subunits, thus enhancing the availability of 30S subunits on which protein synthesis initiation begins. This Gloeobacter violaceus (strain ATCC 29082 / PCC 7421) protein is Translation initiation factor IF-3.